The sequence spans 361 residues: 1D-myo-inositol 2-acetamido-2-deoxy-alpha-D-glucopyranoside deacetylase (361 aa).

Residues 1-12 (MTTTPQPPPQPD) are compositionally biased toward pro residues. The disordered stretch occupies residues 1–27 (MTTTPQPPPQPDETPEGAAGAATAGRD). Residues 16–25 (EGAAGAATAG) are compositionally biased toward low complexity. His-66, Asp-69, and His-207 together coordinate Zn(2+).

Belongs to the MshB deacetylase family. Zn(2+) is required as a cofactor.

The catalysed reaction is 1D-myo-inositol 2-acetamido-2-deoxy-alpha-D-glucopyranoside + H2O = 1D-myo-inositol 2-amino-2-deoxy-alpha-D-glucopyranoside + acetate. Its function is as follows. Catalyzes the deacetylation of 1D-myo-inositol 2-acetamido-2-deoxy-alpha-D-glucopyranoside (GlcNAc-Ins) in the mycothiol biosynthesis pathway. This chain is 1D-myo-inositol 2-acetamido-2-deoxy-alpha-D-glucopyranoside deacetylase, found in Kineococcus radiotolerans (strain ATCC BAA-149 / DSM 14245 / SRS30216).